A 199-amino-acid polypeptide reads, in one-letter code: NAD(P)H dehydrogenase (quinone) (199 aa).

The 187-residue stretch at Val4 to Ile190 folds into the Flavodoxin-like domain. Residues Ser10–Ile15 and Thr78–Phe80 contribute to the FMN site. An NAD(+)-binding site is contributed by Tyr12. Trp98 is a binding site for substrate. FMN contacts are provided by residues Ser113–Gly119 and His134.

Belongs to the WrbA family. Requires FMN as cofactor.

It catalyses the reaction a quinone + NADH + H(+) = a quinol + NAD(+). It carries out the reaction a quinone + NADPH + H(+) = a quinol + NADP(+). The sequence is that of NAD(P)H dehydrogenase (quinone) from Nitrobacter winogradskyi (strain ATCC 25391 / DSM 10237 / CIP 104748 / NCIMB 11846 / Nb-255).